We begin with the raw amino-acid sequence, 575 residues long: uncharacterized protein (575 aa).

In terms of domain architecture, HTH marR-type spans 1-120 (MKLIEHYVAL…YNMWLSEVFG (120 aa)). A DNA-binding region (H-T-H motif) is located at residues 26 to 49 (LTEIADCLFCTERNAKLILHKLEN). The segment at 176 to 490 (EPKPHLVHGW…FGFLHLLLSE (315 aa)) is solute-binding region.

It in the C-terminal section; belongs to the bacterial solute-binding protein 5 family.

This is an uncharacterized protein from Bacillus subtilis (strain 168).